The primary structure comprises 187 residues: ATP synthase subunit delta (187 aa).

This sequence belongs to the ATPase delta chain family. In terms of assembly, F-type ATPases have 2 components, F(1) - the catalytic core - and F(0) - the membrane proton channel. F(1) has five subunits: alpha(3), beta(3), gamma(1), delta(1), epsilon(1). F(0) has three main subunits: a(1), b(2) and c(10-14). The alpha and beta chains form an alternating ring which encloses part of the gamma chain. F(1) is attached to F(0) by a central stalk formed by the gamma and epsilon chains, while a peripheral stalk is formed by the delta and b chains.

The protein resides in the cell membrane. In terms of biological role, f(1)F(0) ATP synthase produces ATP from ADP in the presence of a proton or sodium gradient. F-type ATPases consist of two structural domains, F(1) containing the extramembraneous catalytic core and F(0) containing the membrane proton channel, linked together by a central stalk and a peripheral stalk. During catalysis, ATP synthesis in the catalytic domain of F(1) is coupled via a rotary mechanism of the central stalk subunits to proton translocation. Functionally, this protein is part of the stalk that links CF(0) to CF(1). It either transmits conformational changes from CF(0) to CF(1) or is implicated in proton conduction. The chain is ATP synthase subunit delta from Mesomycoplasma hyopneumoniae (strain 7448) (Mycoplasma hyopneumoniae).